The following is a 506-amino-acid chain: Ecdysteroid UDP-glucosyltransferase (506 aa).

The N-terminal stretch at 1-18 (MTAYLIVFCLCCWSAARS) is a signal peptide.

It belongs to the UDP-glycosyltransferase family.

Its function is as follows. Catalyzes the transfer of glucose from UDP-glucose to ecdysteroids which are insect molting hormones. Expression of egt interferes with normal insect development and block molting. This Lymantria dispar multicapsid nuclear polyhedrosis virus (LdMNPV) protein is Ecdysteroid UDP-glucosyltransferase (EGT).